Consider the following 376-residue polypeptide: Multiphosphoryl transfer protein (376 aa).

In terms of domain architecture, PTS EIIA type-2 spans 2-142; that stretch reads FQLSVQDIHP…EELRALLMGE (141 aa). The Tele-phosphohistidine intermediate; for EIIA activity role is filled by histidine 62. Phosphohistidine; by HPr is present on histidine 62. The segment at 156-284 is m domain; it reads TLDVIASSLV…LTSDDALTDD (129 aa). The HPr domain occupies 285 to 375; that stretch reads VLSAEFVVRN…DAIAAGLGEG (91 aa). Histidine 299 (pros-phosphohistidine intermediate; for HPr activity) is an active-site residue. Position 299 is a phosphohistidine; by EI (histidine 299).

The protein resides in the cytoplasm. Its function is as follows. The phosphoenolpyruvate-dependent sugar phosphotransferase system (sugar PTS), a major carbohydrate active transport system, catalyzes the phosphorylation of incoming sugar substrates concomitantly with their translocation across the cell membrane. The enzyme II FruAB PTS system is involved in fructose transport. This Salmonella typhi protein is Multiphosphoryl transfer protein (fruB).